A 329-amino-acid polypeptide reads, in one-letter code: MTENARTTPEAVRTVACVGAGVIGGGWVAHFLGRGYRVVAWDPAPDAESRLRGLVSSAWPALEELGPAEGASMANLRVVDTLAEAVADADFVQESAPERLDLKIDLLAEIDAATPEGVVIASSTSGYSMSEMQVGARTPGRLVVGHPFNPPYLVPLVEVVGGERSERWAVDWASDFYRAAGKSVITMERELPGFIGNRIQEAAWREALHMVAEGEATVEQIDLAMTSGPGLRWAFFGPCLTFHLAGGEGGMAHMLDHFGPSLKSPWTRLEAPELTAGLRDRMVAGTDEVVAGRSTAELIAQRDRRLIAVARALEEVERAEAAERAGADA.

19-24 (GAGVIG) is an NAD(+) binding site.

This sequence belongs to the 3-hydroxyacyl-CoA dehydrogenase family. L-carnitine dehydrogenase subfamily. Homodimer.

The protein resides in the cytoplasm. The catalysed reaction is carnitine + NAD(+) = 3-dehydrocarnitine + NADH + H(+). The protein operates within amine and polyamine metabolism; carnitine metabolism. In terms of biological role, catalyzes the NAD(+)-dependent oxidation of L-carnitine to 3-dehydrocarnitine. This Nocardiopsis dassonvillei (strain ATCC 23218 / DSM 43111 / CIP 107115 / JCM 7437 / KCTC 9190 / NBRC 14626 / NCTC 10488 / NRRL B-5397 / IMRU 509) (Actinomadura dassonvillei) protein is L-carnitine dehydrogenase.